Consider the following 333-residue polypeptide: COMPASS-like H3K4 histone methylase component WDR5B (333 aa).

8 WD repeats span residues 1–40 (MPSG…KTLE), 41–80 (GHTA…LIHR), 83–122 (GHSS…ECLK), 126–167 (GHTN…RMIK), 169–207 (HSMP…CLKT), 211–252 (DKSP…KVYT), 253–295 (GHTN…ILQR), and 298–333 (GHTD…KQDA).

Unlike WDR5A, does not interact with RBL or TRO.

The protein is COMPASS-like H3K4 histone methylase component WDR5B of Arabidopsis thaliana (Mouse-ear cress).